Consider the following 434-residue polypeptide: Septin-7 (434 aa).

Tyrosine 27 is modified (phosphotyrosine). One can recognise a Septin-type G domain in the interval 44-313; sequence RGFEFTLMVV…ENYRSRKLAA (270 aa). Residues 44-314 are interaction with SEPTIN12; it reads RGFEFTLMVV…NYRSRKLAAV (271 aa). The tract at residues 54-61 is G1 motif; that stretch reads GESGLGKS. Position 54–61 (54–61) interacts with GTP; it reads GESGLGKS. At serine 74 the chain carries Phosphoserine. Residues threonine 87, glycine 113, and 192–200 contribute to the GTP site; that span reads KADTLTPEE. Positions 110–113 are G3 motif; sequence DTPG. The interval 191–194 is G4 motif; the sequence is AKAD. Threonine 225 is modified (phosphothreonine). The GTP site is built by glycine 247 and arginine 262. Positions 329 to 434 form a coiled coil; the sequence is TKSPLAQMEE…EKNKKKGKIF (106 aa). Serine 331 is modified (phosphoserine). At lysine 370 the chain carries N6-acetyllysine. Residues 377-407 are compositionally biased toward basic and acidic residues; the sequence is QRRHEQMKKNLEAQHKGLEEKRRQFEDEKAN. The disordered stretch occupies residues 377-434; that stretch reads QRRHEQMKKNLEAQHKGLEEKRRQFEDEKANWEAQQRILEQQNSSRTLEKNKKKGKIF. At serine 421 the chain carries Phosphoserine. The residue at position 423 (threonine 423) is a Phosphothreonine.

The protein belongs to the TRAFAC class TrmE-Era-EngA-EngB-Septin-like GTPase superfamily. Septin GTPase family. In terms of assembly, septins polymerize into heterooligomeric protein complexes that form filaments, and associate with cellular membranes, actin filaments and microtubules. GTPase activity is required for filament formation. Filaments are assembled from asymmetrical heterotrimers, composed of SEPTIN2, SEPTIN6 and SEPTIN7 that associate head-to-head to form a hexameric unit. Within the trimer, directly interacts with SEPTIN6, while interaction with SEPTIN2 seems indirect. In the absence of SEPTIN6, forms homodimers. Interacts directly with CENPE and links CENPE to septin filaments composed of SEPTIN2, SEPTIN6 and SEPTIN7. Interacts with SEPTIN5, SEPTIN8, SEPTIN9 and SEPTIN11. Component of a septin core octameric complex consisting of SEPTIN12, SEPTIN7, SEPTIN6 and SEPTIN2 or SEPTIN4 in the order 12-7-6-2-2-6-7-12 or 12-7-6-4-4-6-7-12 and located in the sperm annulus; the SEPTIN12:SEPTIN7 association is mediated by the respective GTP-binding domains.

Its subcellular location is the cytoplasm. The protein resides in the chromosome. It is found in the centromere. The protein localises to the kinetochore. It localises to the cytoskeleton. Its subcellular location is the spindle. The protein resides in the cleavage furrow. It is found in the midbody. The protein localises to the cilium axoneme. It localises to the cell projection. Its subcellular location is the cilium. The protein resides in the flagellum. Functionally, filament-forming cytoskeletal GTPase. Required for normal organization of the actin cytoskeleton. Required for normal progress through mitosis. Involved in cytokinesis. Required for normal association of CENPE with the kinetochore. Plays a role in ciliogenesis and collective cell movements. Forms a filamentous structure with SEPTIN12, SEPTIN6, SEPTIN2 and probably SEPTIN4 at the sperm annulus which is required for the structural integrity and motility of the sperm tail during postmeiotic differentiation. The polypeptide is Septin-7 (Pan troglodytes (Chimpanzee)).